A 72-amino-acid polypeptide reads, in one-letter code: Protein RALF-like 36 (72 aa).

The signal sequence occupies residues 1-27; it reads MGISKKTVVQSFALIIIISIVMSTTEA. Disulfide bonds link C43/C51 and C63/C69.

The protein belongs to the plant rapid alkalinization factor (RALF) family.

The protein localises to the secreted. In terms of biological role, cell signaling peptide that may regulate plant stress, growth, and development. Mediates a rapid alkalinization of extracellular space by mediating a transient increase in the cytoplasmic Ca(2+) concentration leading to a calcium-dependent signaling events through a cell surface receptor and a concomitant activation of some intracellular mitogen-activated protein kinases. This chain is Protein RALF-like 36, found in Arabidopsis thaliana (Mouse-ear cress).